The sequence spans 298 residues: Junctional adhesion molecule B (298 aa).

The signal sequence occupies residues 1–28 (MARSPQGLLMLLLLHYLIVALDYHKANG). Residues 29 to 236 (FSASKDHRQE…GKRMQVDVLN (208 aa)) lie on the Extracellular side of the membrane. The region spanning 32-128 (SKDHRQEVTV…GQNLQEDKVM (97 aa)) is the Ig-like V-type domain. Disulfide bonds link cysteine 51/cysteine 110 and cysteine 156/cysteine 214. N-linked (GlcNAc...) asparagine glycosylation occurs at asparagine 99. The Ig-like C2-type domain occupies 135–238 (PAVPACEVPT…RMQVDVLNIS (104 aa)). A helical membrane pass occupies residues 237 to 257 (ISGIIATVVVVAFVISVCGLG). Topologically, residues 258–298 (TCYAQRKGYFSKETSFQKGSPASKVTTMSENDFKHTKSFII) are cytoplasmic.

Belongs to the immunoglobulin superfamily. The expression in Sertoli cells is regulated by TGFB3 through ubiquitin-mediated proteasomal degradation. Expressed by bone marrow stromal cells (at protein level). Expressed in skin (at protein level). Expressed in testis by Sertoli cells (at protein level). Expressed by dorsal root ganglion and spinal cord neurons.

The protein resides in the cell membrane. It is found in the cell junction. The protein localises to the tight junction. Functionally, junctional adhesion protein that mediates heterotypic cell-cell interactions with its cognate receptor JAM3 to regulate different cellular processes. Plays a role in homing and mobilization of hematopoietic stem and progenitor cells within the bone marrow. At the surface of bone marrow stromal cells, it contributes to the retention of the hematopoietic stem and progenitor cells expressing JAM3. Plays a central role in leukocytes extravasation by facilitating not only transmigration but also tethering and rolling of leukocytes along the endothelium. Tethering and rolling of leukocytes are dependent on the binding by JAM2 of the integrin alpha-4/beta-1. Plays a role in spermatogenesis where JAM2 and JAM3, which are respectively expressed by Sertoli and germ cells, mediate an interaction between both cell types and play an essential role in the anchorage of germ cells onto Sertoli cells and the assembly of cell polarity complexes during spermatid differentiation. Also functions as an inhibitory somatodendritic cue that prevents the myelination of non-axonal parts of neurons. During myogenesis, it is involved in myocyte fusion. May also play a role in angiogenesis. This is Junctional adhesion molecule B from Mus musculus (Mouse).